The sequence spans 593 residues: NADH-quinone oxidoreductase subunit C/D (593 aa).

An NADH dehydrogenase I subunit C region spans residues 1 to 184; sequence MTADNALYIP…DPYSLTLAKQ (184 aa). Residues 208-593 are NADH dehydrogenase I subunit D; sequence DYMFLNLGPN…IDFVMADVDR (386 aa).

This sequence in the N-terminal section; belongs to the complex I 30 kDa subunit family. In the C-terminal section; belongs to the complex I 49 kDa subunit family. In terms of assembly, NDH-1 is composed of 13 different subunits. Subunits NuoB, CD, E, F, and G constitute the peripheral sector of the complex.

The protein resides in the cell inner membrane. The enzyme catalyses a quinone + NADH + 5 H(+)(in) = a quinol + NAD(+) + 4 H(+)(out). NDH-1 shuttles electrons from NADH, via FMN and iron-sulfur (Fe-S) centers, to quinones in the respiratory chain. The immediate electron acceptor for the enzyme in this species is believed to be ubiquinone. Couples the redox reaction to proton translocation (for every two electrons transferred, four hydrogen ions are translocated across the cytoplasmic membrane), and thus conserves the redox energy in a proton gradient. The polypeptide is NADH-quinone oxidoreductase subunit C/D (Pseudomonas syringae pv. syringae (strain B728a)).